A 420-amino-acid polypeptide reads, in one-letter code: Methyltransferase/ribosomally synthesized cyclic peptide gymnopeptides precursor gymMA1 (420 aa).

The methyltransferase domain stretch occupies residues 1–251 (MQSSTQKQAG…GISTFYIPPK (251 aa)). Catalysis depends on residues Arg72, Tyr76, and Tyr98. Residues Tyr98, His100, Val103, Ala130, Gln172, Ala213, Ser244, and Thr245 each contribute to the S-adenosyl-L-methionine site. The tract at residues 252 to 378 (ELKDPSMDIM…WALRCAMKKM (127 aa)) is clasp domain. Positions 379–392 (PSSFMDEVDANNLP) are precursor leader. An N-methylvaline mark is found at Val394 and Val396. Gly398 bears the N-methylglycine mark. Val399 carries the N-methylvaline modification. An N-methylalanine modification is found at Ala400. Gly402 bears the N-methylglycine mark. Val404, Val406, Val408, and Val410 each carry N-methylvaline.

This sequence in the N-terminal section; belongs to the precorrin methyltransferase family. Homodimer. Post-translationally, gymMA1 automethylates at Val-394, Val-396, Gly-398, Val-399, Ala-400, Gly-402, Val-404, Val-406, Val-408 and Val-410 before being processed by a prolyloligopeptidase which likely forms a peptidyl ester upon removal of the follower propeptide, which then undergoes macrocyclization with the N-terminus of the modified core peptide. Peptide backbone alpha-N-methylations change the physicochemical properties of amide bonds to provide structural constraints and other favorable characteristics including biological membrane permeability to peptides.

It participates in mycotoxin biosynthesis. Fusion protein of the methyltransferase gymM1 and the gymnopeptides precursor; part of the gene cluster that mediates the biosynthesis of gymnopeptides, highly methylated cyclic octadecapeptides with striking antiproliferative activity on several human cancer cell lines. Gymnopeptides derive from the C-terminus of the gymMA1 protein, and it is the gymMA1 protein that methylates its own C-terminus using S-adenosyl methionine (SAM). The C-terminus is subsequently cleaved off and macrocyclized by a prolyloligopeptidase to give the final product. In Gymnopus fusipes (Spindle toughshank), this protein is Methyltransferase/ribosomally synthesized cyclic peptide gymnopeptides precursor gymMA1.